The following is a 473-amino-acid chain: UTP--glucose-1-phosphate uridylyltransferase (473 aa).

UTP-binding positions include 89 to 92, Lys103, Gln166, and Gly195; that span reads LNGG. 91-92 lines the substrate pocket; it reads GG. Substrate is bound by residues His196 and 224-226; that span reads NSD. Residues Asp226 and Lys364 each contribute to the UTP site.

Belongs to the UDPGP type 1 family.

It is found in the cytoplasm. It carries out the reaction alpha-D-glucose 1-phosphate + UTP + H(+) = UDP-alpha-D-glucose + diphosphate. Plays a central role as a glucosyl donor in cellular metabolic pathways. The protein is UTP--glucose-1-phosphate uridylyltransferase of Hordeum vulgare (Barley).